The sequence spans 245 residues: U21-ctenitoxin-Pn1a (245 aa).

The Peptidase S1 domain occupies 1-245; the sequence is IVYGTVTTPG…FRSWMDKVMT (245 aa). An intrachain disulfide couples Cys-30 to Cys-46. Catalysis depends on charge relay system residues His-45 and Asp-95. 2 disulfide bridges follow: Cys-161–Cys-183 and Cys-192–Cys-221. The active-site Charge relay system is the Ser-196.

Expressed by the venom gland.

The protein localises to the secreted. Protease. Hydrolyzes gelatin and succinyl casein. The polypeptide is U21-ctenitoxin-Pn1a (Phoneutria nigriventer (Brazilian armed spider)).